Consider the following 122-residue polypeptide: Large ribosomal subunit protein uL14c (122 aa).

The protein belongs to the universal ribosomal protein uL14 family. In terms of assembly, part of the 50S ribosomal subunit.

It is found in the plastid. In terms of biological role, binds to 23S rRNA. This chain is Large ribosomal subunit protein uL14c, found in Cuscuta gronovii (Common dodder).